The chain runs to 530 residues: MRNVIRRVTTMTFTFLLQSPPLPISPSPPQFSLSSSPLSKTQRFITPSQGSRLRTLCTKVIIPNMQDSGSPPLSYLTQREAAEIDETLMGPLGFSIDQLMELAGLSVAASIAEVYKPEEYSRVLAICGPGNNGGDGLVAARHLHHFGYKPFICYPKRTAKPLYTGLVTQLDSLSVPFVSVEDLPDDLSKDFDVIVDAMFGFSFHGAPRPPFDDLIRRLVSLQNYEQTLQKHPVIVSVDIPSGWHVEEGDHEDGGIKPDMLVSLTAPKLCAKRFRGPHHFLGGRFVPPSVAEKYKLELPSYPGTSMCVRIGKPPKVDISAMRVNYVSPELLEEQVETDPTVQFRKWFDEAVAAGLRETNAMALSTANKDKKPSSRMVLLKGFDENGFVWFTNYESKKGSDLSENPSAALLFYWEILNRQVRIEGPVERIPESESENYFHSRPRGSQIGAIVSKQSSVVPGRHVLYDEYEELTKQYSDGSVIPKPKNWGGFRLKPNLFEFWQGQPSRLHDRLQYSLQDVNGNPAWKIHRLAP.

The transit peptide at 1–64 (MRNVIRRVTT…TLCTKVIIPN (64 aa)) directs the protein to the chloroplast. Methionine 65 carries the post-translational modification N-acetylmethionine. Residues 81–297 (AAEIDETLMG…SVAEKYKLEL (217 aa)) enclose the YjeF N-terminal domain. Residue 131-135 (NNGGD) coordinates (6S)-NADPHX. Asparagine 132 and aspartate 196 together coordinate K(+). (6S)-NADPHX is bound by residues 200-206 (GFSFHGA) and aspartate 238. Serine 241 provides a ligand contact to K(+). 247–250 (EGDH) provides a ligand contact to pyridoxal 5'-phosphate. 321–324 (RVNY) contributes to the substrate binding site. 325–327 (VSP) lines the pyridoxal 5'-phosphate pocket. 374 to 377 (RMVL) is a binding site for FMN. Pyridoxal 5'-phosphate is bound at residue lysine 379. FMN-binding positions include 389 to 390 (FT), 395 to 396 (KK), and glutamine 418. Pyridoxal 5'-phosphate contacts are provided by tyrosine 436, arginine 440, and serine 444. FMN is bound by residues 453-454 (QS) and tryptophan 499. 505–507 (RLH) serves as a coordination point for pyridoxal 5'-phosphate. Arginine 509 serves as a coordination point for FMN.

It in the N-terminal section; belongs to the NnrE/AIBP family. The protein in the C-terminal section; belongs to the pyridoxamine 5'-phosphate oxidase family. Homodimer. It depends on FMN as a cofactor. The cofactor is K(+). As to expression, expressed in leaves, stems, flowers and roots.

Its subcellular location is the plastid. It is found in the chloroplast. It catalyses the reaction pyridoxamine 5'-phosphate + O2 + H2O = pyridoxal 5'-phosphate + H2O2 + NH4(+). It carries out the reaction pyridoxine 5'-phosphate + O2 = pyridoxal 5'-phosphate + H2O2. The enzyme catalyses (6R)-NADHX = (6S)-NADHX. The catalysed reaction is (6R)-NADPHX = (6S)-NADPHX. It functions in the pathway cofactor metabolism; pyridoxal 5'-phosphate salvage; pyridoxal 5'-phosphate from pyridoxamine 5'-phosphate: step 1/1. Its pathway is cofactor metabolism; pyridoxal 5'-phosphate salvage; pyridoxal 5'-phosphate from pyridoxine 5'-phosphate: step 1/1. Its function is as follows. Catalyzes the oxidation of either pyridoxine 5'-phosphate (PNP) or pyridoxamine 5'-phosphate (PMP) into pyridoxal 5'-phosphate (PLP). Involved in the PLP salvage pathway. Has a higher preference for PNP over PMP. May also catalyze the epimerization of the S- and R-forms of NAD(P)HX, a damaged form of NAD(P)H that is a result of enzymatic or heat-dependent hydration. This is a prerequisite for the S-specific NAD(P)H-hydrate dehydratase to allow the repair of both epimers of NAD(P)HX. The sequence is that of Pyridoxine/pyridoxamine 5'-phosphate oxidase 1, chloroplastic (PPOX1) from Arabidopsis thaliana (Mouse-ear cress).